The following is a 192-amino-acid chain: FAD-linked sulfhydryl oxidase erv2 (192 aa).

At 1–8 the chain is on the cytoplasmic side; that stretch reads MILNRRIQ. A helical; Signal-anchor membrane pass occupies residues 9–29; sequence VILPTLLILSFIIWIFHSVMV. At 30-192 the chain is on the lumenal side; that stretch reads DKDWRLFMPE…VINEDHDYSG (163 aa). The ERV/ALR sulfhydryl oxidase domain occupies 61–162; the sequence is HDNNTNNLMV…TSCDGFNERY (102 aa). Positions 74, 138, 141, 145, and 162 each coordinate FAD. Cys138 and Cys155 are oxidised to a cystine.

FAD is required as a cofactor.

The protein localises to the endoplasmic reticulum membrane. The protein resides in the cytoplasm. It localises to the nucleus. It carries out the reaction 2 R'C(R)SH + O2 = R'C(R)S-S(R)CR' + H2O2. FAD-dependent sulfhydryl oxidase that catalyzes disulfide bond formation in the endoplasmic reticulum lumen. The sequence is that of FAD-linked sulfhydryl oxidase erv2 (erv2) from Schizosaccharomyces pombe (strain 972 / ATCC 24843) (Fission yeast).